Here is a 266-residue protein sequence, read N- to C-terminus: Undecaprenyl-diphosphatase (266 aa).

The next 8 membrane-spanning stretches (helical) occupy residues 4-24 (ILSA…PISS), 39-59 (LSII…IIYY), 86-106 (LKLI…GTFI), 112-132 (MFTL…ILML), 145-165 (ILLA…PGIS), 182-202 (KSAF…AILL), 210-230 (IFMV…FVVG), and 246-266 (LYYF…FVRI).

It belongs to the UppP family.

It is found in the cell inner membrane. It carries out the reaction di-trans,octa-cis-undecaprenyl diphosphate + H2O = di-trans,octa-cis-undecaprenyl phosphate + phosphate + H(+). Functionally, catalyzes the dephosphorylation of undecaprenyl diphosphate (UPP). Confers resistance to bacitracin. This is Undecaprenyl-diphosphatase from Borreliella burgdorferi (strain ATCC 35210 / DSM 4680 / CIP 102532 / B31) (Borrelia burgdorferi).